The sequence spans 231 residues: Ureidoacrylate amidohydrolase RutB (231 aa).

The Proton acceptor role is filled by Asp-25. Lys-134 is an active-site residue. Residue Cys-167 is the Nucleophile of the active site.

This sequence belongs to the isochorismatase family. RutB subfamily.

It carries out the reaction (Z)-3-ureidoacrylate + H2O + H(+) = (Z)-3-aminoacrylate + NH4(+) + CO2. It catalyses the reaction (Z)-3-ureidoacrylate + H2O = (Z)-3-aminoacrylate + carbamate + H(+). The enzyme catalyses (Z)-2-methylureidoacrylate + H2O + H(+) = (Z)-2-methylaminoacrylate + NH4(+) + CO2. Its function is as follows. Hydrolyzes ureidoacrylate to form aminoacrylate and carbamate. The carbamate hydrolyzes spontaneously, thereby releasing one of the nitrogen atoms of the pyrimidine ring as ammonia and one of its carbon atoms as CO2. The protein is Ureidoacrylate amidohydrolase RutB of Escherichia coli O157:H7 (strain EC4115 / EHEC).